A 472-amino-acid chain; its full sequence is MSQYITNPRQQSRQLRRNSPSGQEPHFATSSVPLNQRNSILDPHLSVLQLLDRADPPSELSSLKHGEIAKPATPRRSGFESVNCSISESWQSIKHTDCSMVNTQGDATHQHAGILSSSDTSEDEPDAQLSPSPNNFAFPNSATSIFPEAPHNLEASSLREYQNSEIANPREENDNETVTMSLMNSSNSFVMPKLSLIQQSQKFCILIVGKPAQRFYRDIPRAYHKMFEVRDVGHLSPREMNKYSAVMVIFGEPKEGKELLEKVAAHNSNIIAVCQRGQQQQISNILNRYSKSNEIRLVYHLTVMSDHQDVHRLLRYLNTLSTEVDSGYETEVGSRKIRKRRKSSKKRSPQITVNRWVIWSISLTVGVGLGYCISCLLSSTSSTLSVTLRSGDEVTIMEDIHNSPHESPFDNYLRHLLLAVKRAVKQVNSSFKQYLSGQSLPVLWMQRIGKEWLSEASDPTLPGVTALDLVLV.

3 disordered regions span residues 1–35 (MSQY…VPLN), 58–80 (SELS…SGFE), and 113–139 (GILS…FAFP). Over residues 58–68 (SELSSLKHGEI) the composition is skewed to basic and acidic residues. Over residues 129–139 (LSPSPNNFAFP) the composition is skewed to polar residues. The helical transmembrane segment at 356–372 (WVIWSISLTVGVGLGYC) threads the bilayer.

The protein belongs to the ATG32 family.

Its subcellular location is the mitochondrion outer membrane. It is found in the vacuole membrane. It localises to the preautophagosomal structure membrane. In terms of biological role, mitophagy-specific receptor that recruits the autophagic machinery to mitochondria and regulates selective degradation of mitochondria. Mitophagy contributes to regulate mitochondrial quantity and quality by eliminating the mitochondria to a basal level to fulfill cellular energy requirements and preventing excess ROS production. Recruits ATG11 to the surface of mitochondria. Also promotes autophagy-dependent peroxisome degradation. This is Autophagy-related protein 32 (ATG32) from Lachancea thermotolerans (strain ATCC 56472 / CBS 6340 / NRRL Y-8284) (Yeast).